Reading from the N-terminus, the 946-residue chain is Aminopeptidase N (946 aa).

An N-terminal signal peptide occupies residues 1–15 (MRLLICLTLLGLVCG). N-linked (GlcNAc...) asparagine glycosylation is present at N60. Residue 308–312 (GAMEN) participates in substrate binding. H344 serves as a coordination point for Zn(2+). Residue E345 is the Proton acceptor of the active site. Zn(2+) contacts are provided by H348 and E367. N-linked (GlcNAc...) asparagine glycans are attached at residues N550 and N605. 2 cysteine pairs are disulfide-bonded: C715–C722 and C751–C787.

Belongs to the peptidase M1 family. Zn(2+) serves as cofactor.

The protein localises to the cell membrane. The catalysed reaction is Release of an N-terminal amino acid, Xaa-|-Yaa- from a peptide, amide or arylamide. Xaa is preferably Ala, but may be most amino acids including Pro (slow action). When a terminal hydrophobic residue is followed by a prolyl residue, the two may be released as an intact Xaa-Pro dipeptide.. The polypeptide is Aminopeptidase N (APN1) (Plutella xylostella (Diamondback moth)).